The sequence spans 914 residues: Protein translocase subunit SecA (914 aa).

ATP-binding positions include Gln87, 105–109, and Asp508; that span reads GEGKT. 4 residues coordinate Zn(2+): Cys898, Cys900, Cys909, and His910.

The protein belongs to the SecA family. In terms of assembly, monomer and homodimer. Part of the essential Sec protein translocation apparatus which comprises SecA, SecYEG and auxiliary proteins SecDF-YajC and YidC. The cofactor is Zn(2+).

It is found in the cell inner membrane. Its subcellular location is the cytoplasm. It carries out the reaction ATP + H2O + cellular proteinSide 1 = ADP + phosphate + cellular proteinSide 2.. Part of the Sec protein translocase complex. Interacts with the SecYEG preprotein conducting channel. Has a central role in coupling the hydrolysis of ATP to the transfer of proteins into and across the cell membrane, serving both as a receptor for the preprotein-SecB complex and as an ATP-driven molecular motor driving the stepwise translocation of polypeptide chains across the membrane. The chain is Protein translocase subunit SecA from Xylella fastidiosa (strain 9a5c).